We begin with the raw amino-acid sequence, 239 residues long: Endonuclease V (239 aa).

Residues Asp-50 and Asp-118 each contribute to the Mg(2+) site.

Belongs to the endonuclease V family. Requires Mg(2+) as cofactor.

Its subcellular location is the cytoplasm. The enzyme catalyses Endonucleolytic cleavage at apurinic or apyrimidinic sites to products with a 5'-phosphate.. Its function is as follows. DNA repair enzyme involved in the repair of deaminated bases. Selectively cleaves double-stranded DNA at the second phosphodiester bond 3' to a deoxyinosine leaving behind the intact lesion on the nicked DNA. This is Endonuclease V from Xylella fastidiosa (strain 9a5c).